A 736-amino-acid chain; its full sequence is 1,4-alpha-glucan branching enzyme GlgB (736 aa).

Residue aspartate 415 is the Nucleophile of the active site. Catalysis depends on glutamate 470, which acts as the Proton donor.

The protein belongs to the glycosyl hydrolase 13 family. GlgB subfamily. Monomer.

The enzyme catalyses Transfers a segment of a (1-&gt;4)-alpha-D-glucan chain to a primary hydroxy group in a similar glucan chain.. The protein operates within glycan biosynthesis; glycogen biosynthesis. Catalyzes the formation of the alpha-1,6-glucosidic linkages in glycogen by scission of a 1,4-alpha-linked oligosaccharide from growing alpha-1,4-glucan chains and the subsequent attachment of the oligosaccharide to the alpha-1,6 position. The protein is 1,4-alpha-glucan branching enzyme GlgB of Burkholderia cenocepacia (strain HI2424).